The chain runs to 529 residues: UDP-glucuronosyltransferase 2B11 (529 aa).

The signal sequence occupies residues 1-21; the sequence is MTLKWTSVLLLIHLSCYFSSG. K135 bears the N6-succinyllysine mark. The N-linked (GlcNAc...) asparagine glycan is linked to N315. A helical transmembrane segment spans residues 493–513; sequence VIGFLLACVATVIFIITKFCL.

The protein belongs to the UDP-glycosyltransferase family. In terms of tissue distribution, widely expressed.

It localises to the microsome membrane. Its subcellular location is the endoplasmic reticulum membrane. It catalyses the reaction glucuronate acceptor + UDP-alpha-D-glucuronate = acceptor beta-D-glucuronoside + UDP + H(+). Functionally, UDPGT is of major importance in the conjugation and subsequent elimination of potentially toxic xenobiotics and endogenous compounds. This is UDP-glucuronosyltransferase 2B11 (UGT2B11) from Homo sapiens (Human).